Reading from the N-terminus, the 155-residue chain is Probable jacalin-related lectin 26 (155 aa).

The next 2 membrane-spanning stretches (helical) occupy residues 26-48 (AYLY…IAMI) and 127-149 (VSFV…VLFL). Positions 47 to 155 (MIRAGSVGKK…VLFLMKFKRS (109 aa)) constitute a Jacalin-type lectin domain.

This sequence belongs to the jacalin lectin family.

It is found in the membrane. The protein is Probable jacalin-related lectin 26 (JAL26) of Arabidopsis thaliana (Mouse-ear cress).